A 1172-amino-acid chain; its full sequence is Thrombospondin-2 (1172 aa).

An N-terminal signal peptide occupies residues 1-18; that stretch reads MVWRLVLLALWVWPSTQA. Positions 19–215 constitute a Laminin G-like domain; that stretch reads GHQDKDTTFD…LQNVHLVFEN (197 aa). A heparin-binding region spans residues 19–232; it reads GHQDKDTTFD…KKGCQQGQGA (214 aa). 3 N-linked (GlcNAc...) asparagine glycosylation sites follow: N151, N316, and N330. One can recognise a VWFC domain in the interval 318–375; sequence SACWQDGRFFAENETWVVDSCTTCTCKKFKTICHQITCPPATCASPSFVEGECCPSCL. TSP type-1 domains are found at residues 381 to 431, 437 to 492, and 494 to 549; these read EEGW…SKCD, DGGW…APCP, and DGRW…RSCP. Intrachain disulfides connect C393–C425, C397–C430, C408–C415, C449–C486, C453–C491, C464–C476, C506–C543, C510–C548, C521–C533, C553–C564, C558–C574, C577–C588, C594–C610, C601–C619, C622–C646, C652–C665, C659–C678, C680–C691, C707–C715, C720–C740, C756–C776, C779–C799, C815–C835, C838–C858, C876–C896, C912–C932, and C948–C1169. N457 carries an N-linked (GlcNAc...) asparagine glycan. The 41-residue stretch at 549 to 589 folds into the EGF-like 1 domain; that stretch reads PVDGCLSNPCFPGAQCSSFPDGSWSCGSCPVGFLGNGTHCE. An N-linked (GlcNAc...) asparagine glycan is attached at N584. The 45-residue stretch at 648 to 692 folds into the EGF-like 2 domain; that stretch reads PENPCKDKTHNCHKHAECIYLGHFSDPMYKCECQTGYAGDGLICG. TSP type-3 repeat units lie at residues 693 to 728, 729 to 764, 765 to 787, 788 to 823, 824 to 846, 847 to 884, 885 to 920, and 921 to 956; these read EDSD…NSGQ, EDFD…NPRQ, ADYD…NPAQ, IDTD…NTDQ, RDTD…NPDQ, TDVD…NANQ, ADHD…NPDQ, and EDLD…AISE. N710 carries N-linked (GlcNAc...) asparagine glycosylation. Positions 843–931 are disordered; sequence NPDQTDVDND…DLDGDGRGDI (89 aa). Positions 847–866 are enriched in acidic residues; it reads TDVDNDLVGDQCDNNEDIDD. Positions 870 to 884 are enriched in polar residues; sequence QNNQDNCPYISNANQ. A compositionally biased stretch (acidic residues) spans 896-905; sequence CDPDDDNDGV. The Cell attachment site signature appears at 928–930; sequence RGD. The region spanning 960–1172 is the TSP C-terminal domain; it reads RNFQMVPLDP…SDLKYECRDI (213 aa). N-linked (GlcNAc...) asparagine glycosylation is present at N1069.

The protein belongs to the thrombospondin family. Homotrimer; disulfide-linked. Interacts (via the TSP type I repeats) with CD36; the interaction conveys an antiangiogenic effect. Interacts (via the TSP type I repeats) with HRG; the interaction blocks the antiangiogenic effect of THBS2 with CD36. Can bind to fibrinogen, fibronectin, laminin and type V collagen. As to expression, high expression in invertebral disk tissue.

Adhesive glycoprotein that mediates cell-to-cell and cell-to-matrix interactions. Ligand for CD36 mediating antiangiogenic properties. The protein is Thrombospondin-2 (THBS2) of Homo sapiens (Human).